The following is a 482-amino-acid chain: MTISVQNKNVGRITQIIGPVLDITFSAGKVPNIYNALVVTGKTPSGDEIRVTCEVQQLLGDNCVRAVSMNATDGLMRGLEVIDTGTALTVPVGEATLGRIFNVLGETVDNLGTVGNKQGLPIHRPAPAFVDLDTKLSIFETGIKVVDLLAPYRRGGKIGLFGGAGVGKTVLIMELINNIAKAHGGVSVFGGVGERTREGNDLYMEMKESKVINAENLSESKVALVYGQMNEPPGARMRVALTALTMAEYFRDVNKQDVLLFIDNIFRFVQAGSEVSALLGRMPSAVGYQPTLASEMGGLQERITSTKDGSITSIQAVYVPADDLTDPAPATTFAHLDATTVLSRGLAAKGIYPAVDPLDSTSTMLQPWIVSKEHYECAQNVKQTLQRYKELQDIIAILGLDELAEEDRLLVARARKIERFLSQPFFVAEVFTGAPGKYVSLTETIKGFNLILSGEVDSLPEQAFYMAGTADDVLAQAEALSK.

162-169 serves as a coordination point for ATP; that stretch reads GGAGVGKT.

This sequence belongs to the ATPase alpha/beta chains family. In terms of assembly, F-type ATPases have 2 components, CF(1) - the catalytic core - and CF(0) - the membrane proton channel. CF(1) has five subunits: alpha(3), beta(3), gamma(1), delta(1), epsilon(1). CF(0) has four main subunits: a(1), b(1), b'(1) and c(9-12).

It localises to the plastid. It is found in the chloroplast thylakoid membrane. The enzyme catalyses ATP + H2O + 4 H(+)(in) = ADP + phosphate + 5 H(+)(out). Produces ATP from ADP in the presence of a proton gradient across the membrane. The catalytic sites are hosted primarily by the beta subunits. The protein is ATP synthase subunit beta, chloroplastic of Pleurastrum terricola (Filamentous green alga).